The primary structure comprises 30 residues: Putative UPF0377 protein YNR075C-A (30 aa).

This sequence belongs to the UPF0377 family.

This chain is Putative UPF0377 protein YNR075C-A, found in Saccharomyces cerevisiae (strain ATCC 204508 / S288c) (Baker's yeast).